We begin with the raw amino-acid sequence, 528 residues long: Na(+)/H(+) antiporter NhaB (528 aa).

Helical transmembrane passes span 23-45, 66-86, 95-115, 130-164, 203-223, 241-261, 310-330, 349-369, 390-410, 448-468, and 475-495; these read FAILSFLAINPILFYLNPFIAGW, PGGLLAIEAVIIGMTSPTQVL, VLLLLVFMVAGIYFMKQLLLY, VSMLFCIASAFLSAFLDALTVIAVIITVAVGFYSI, LLMHAGVGTALGGVCTMVGEP, IRMSPVTVPVFFAGILTCFIV, LIVGLAFHLASVGLIGLSVII, EEALPFTALLAVFFAVVGVII, LVIFYIANGLLSMVSDNVFVG, ATPNGQAAFLFLLTSALAPLI, and MVMMALPYTIVLSIVGILAIE.

It belongs to the NhaB Na(+)/H(+) (TC 2.A.34) antiporter family.

Its subcellular location is the cell inner membrane. It catalyses the reaction 2 Na(+)(in) + 3 H(+)(out) = 2 Na(+)(out) + 3 H(+)(in). In terms of biological role, na(+)/H(+) antiporter that extrudes sodium in exchange for external protons. In Shewanella amazonensis (strain ATCC BAA-1098 / SB2B), this protein is Na(+)/H(+) antiporter NhaB.